A 73-amino-acid chain; its full sequence is Putative antitoxin VapB9 (73 aa).

Functionally, antitoxin component of a possible type II toxin-antitoxin (TA) system. The cognate toxin is VapC9. The protein is Putative antitoxin VapB9 (vapB9) of Mycobacterium tuberculosis (strain CDC 1551 / Oshkosh).